Reading from the N-terminus, the 83-residue chain is Hainantoxin-III (83 aa).

An N-terminal signal peptide occupies residues 1-21 (MKASMFLALAGLVLLFVVGYA). A propeptide spanning residues 22–48 (SESEEKEFPRELLSKIFALDDFKGEER) is cleaved from the precursor. Intrachain disulfides connect Cys-50-Cys-65, Cys-57-Cys-70, and Cys-64-Cys-77. A Leucine amide modification is found at Leu-81.

It belongs to the neurotoxin 10 (Hwtx-1) family. 15 (Hntx-3) subfamily. Monomer. In terms of tissue distribution, expressed by the venom gland.

It is found in the secreted. Its function is as follows. Selective antagonist of neuronal tetrodotoxin (TTX)-sensitive voltage-gated sodium channels (IC(50)=1270 nM on Nav1.1/SCN1A, 270 nM on Nav1.2/SCN2A, 491 nM on Nav1.3/SCN3A and 232 nM on Nav1.7/SCN9A). This toxin suppress Nav1.7 current amplitude without significantly altering the activation, inactivation, and repriming kinetics. Short extreme depolarizations partially activate the toxin-bound channel, indicating voltage-dependent inhibition of this toxin. This toxin increases the deactivation of the Nav1.7 current after extreme depolarizations. The toxin-Nav1.7 complex is gradually dissociated upon prolonged strong depolarizations in a voltage-dependent manner, and the unbound toxin rebinds to Nav1.7 after a long repolarization. Moreover, analysis of chimeric channels showed that the DIIS3-S4 linker is critical for toxin binding to Nav1.7. These data are consistent with this toxin interacting with Nav1.7 site 4 and trapping the domain II voltage sensor in the closed state. The polypeptide is Hainantoxin-III (Cyriopagopus hainanus (Chinese bird spider)).